We begin with the raw amino-acid sequence, 365 residues long: UDP-N-acetylglucosamine--N-acetylmuramyl-(pentapeptide) pyrophosphoryl-undecaprenol N-acetylglucosamine transferase (365 aa).

Residues 10–12 (TGG), N128, R170, S199, I250, and Q295 each bind UDP-N-acetyl-alpha-D-glucosamine.

It belongs to the glycosyltransferase 28 family. MurG subfamily.

The protein resides in the cell inner membrane. It catalyses the reaction di-trans,octa-cis-undecaprenyl diphospho-N-acetyl-alpha-D-muramoyl-L-alanyl-D-glutamyl-meso-2,6-diaminopimeloyl-D-alanyl-D-alanine + UDP-N-acetyl-alpha-D-glucosamine = di-trans,octa-cis-undecaprenyl diphospho-[N-acetyl-alpha-D-glucosaminyl-(1-&gt;4)]-N-acetyl-alpha-D-muramoyl-L-alanyl-D-glutamyl-meso-2,6-diaminopimeloyl-D-alanyl-D-alanine + UDP + H(+). It functions in the pathway cell wall biogenesis; peptidoglycan biosynthesis. Functionally, cell wall formation. Catalyzes the transfer of a GlcNAc subunit on undecaprenyl-pyrophosphoryl-MurNAc-pentapeptide (lipid intermediate I) to form undecaprenyl-pyrophosphoryl-MurNAc-(pentapeptide)GlcNAc (lipid intermediate II). In Prosthecochloris aestuarii (strain DSM 271 / SK 413), this protein is UDP-N-acetylglucosamine--N-acetylmuramyl-(pentapeptide) pyrophosphoryl-undecaprenol N-acetylglucosamine transferase.